A 36-amino-acid polypeptide reads, in one-letter code: Glucagon (36 aa).

It belongs to the glucagon family. In terms of tissue distribution, produced by the X-cells of the islets of pancreas.

Its subcellular location is the secreted. In terms of biological role, promotes hydrolysis of glycogen and lipids, and raises the blood sugar level. The sequence is that of Glucagon (gcg) from Hydrolagus colliei (Spotted ratfish).